The sequence spans 317 residues: Probable cell division protein WhiA (317 aa).

A DNA-binding region (H-T-H motif) is located at residues 281–314; the sequence is SLKELGKMLEPPVGKSGVNHRLRKIEKIAEELRK.

The protein belongs to the WhiA family.

Functionally, involved in cell division and chromosome segregation. This Clostridium acetobutylicum (strain ATCC 824 / DSM 792 / JCM 1419 / IAM 19013 / LMG 5710 / NBRC 13948 / NRRL B-527 / VKM B-1787 / 2291 / W) protein is Probable cell division protein WhiA.